Reading from the N-terminus, the 493-residue chain is Glutamate--tRNA ligase (493 aa).

Positions 10 to 20 match the 'HIGH' region motif; sequence PSPTGDPHVGT. Positions 251–255 match the 'KMSKS' region motif; the sequence is KLSKR. Lysine 254 contacts ATP.

The protein belongs to the class-I aminoacyl-tRNA synthetase family. Glutamate--tRNA ligase type 1 subfamily. Monomer.

It localises to the cytoplasm. The catalysed reaction is tRNA(Glu) + L-glutamate + ATP = L-glutamyl-tRNA(Glu) + AMP + diphosphate. Catalyzes the attachment of glutamate to tRNA(Glu) in a two-step reaction: glutamate is first activated by ATP to form Glu-AMP and then transferred to the acceptor end of tRNA(Glu). In Pseudomonas putida (strain ATCC 47054 / DSM 6125 / CFBP 8728 / NCIMB 11950 / KT2440), this protein is Glutamate--tRNA ligase.